The sequence spans 299 residues: Glycine--tRNA ligase alpha subunit (299 aa).

The protein belongs to the class-II aminoacyl-tRNA synthetase family. As to quaternary structure, tetramer of two alpha and two beta subunits.

The protein localises to the cytoplasm. It carries out the reaction tRNA(Gly) + glycine + ATP = glycyl-tRNA(Gly) + AMP + diphosphate. In Desulforapulum autotrophicum (strain ATCC 43914 / DSM 3382 / VKM B-1955 / HRM2) (Desulfobacterium autotrophicum), this protein is Glycine--tRNA ligase alpha subunit.